A 475-amino-acid polypeptide reads, in one-letter code: Ribulose bisphosphate carboxylase large chain (475 aa).

A propeptide spanning residues 1–2 (MS) is cleaved from the precursor. Proline 3 is modified (N-acetylproline). An N6,N6,N6-trimethyllysine modification is found at lysine 14. Substrate contacts are provided by asparagine 123 and threonine 173. Lysine 175 (proton acceptor) is an active-site residue. Residue lysine 177 coordinates substrate. Lysine 201, aspartate 203, and glutamate 204 together coordinate Mg(2+). At lysine 201 the chain carries N6-carboxylysine. Histidine 294 acts as the Proton acceptor in catalysis. Arginine 295, histidine 327, and serine 379 together coordinate substrate.

This sequence belongs to the RuBisCO large chain family. Type I subfamily. In terms of assembly, heterohexadecamer of 8 large chains and 8 small chains. Mg(2+) is required as a cofactor.

The protein resides in the plastid. It is found in the chloroplast. The enzyme catalyses 2 (2R)-3-phosphoglycerate + 2 H(+) = D-ribulose 1,5-bisphosphate + CO2 + H2O. It carries out the reaction D-ribulose 1,5-bisphosphate + O2 = 2-phosphoglycolate + (2R)-3-phosphoglycerate + 2 H(+). RuBisCO catalyzes two reactions: the carboxylation of D-ribulose 1,5-bisphosphate, the primary event in carbon dioxide fixation, as well as the oxidative fragmentation of the pentose substrate in the photorespiration process. Both reactions occur simultaneously and in competition at the same active site. In Coleochaete orbicularis (Charophycean green alga), this protein is Ribulose bisphosphate carboxylase large chain.